The chain runs to 1088 residues: MDAWKEITKTTENDGVSTCSLSSIAFDPYSELVWTGHKNGQIKSSFGPSLTSYTQFIGHEGPVHQVLPQERGVFSLSSKSLRLSNRKGTIRWRYQDSDCIDYRAMFYQSRNNPEVVIGGYHQKLTVVNAERGISIHKDKNVSDIFIMRRNRLLCCGSTNGEIILRDPNSFQPVNKVVAHTGTISDIDTSGNLLLSCGYSLRHGTYMLDPFVKVWDLRNLSSLVPIPFPAGPTIIRMHPKLSTTAVVCSCSGQFHIVDTGNPLDAKLMQIPLTSYLTGMDIASTGDAMVFTDVEDNIHLWSPLENPSFSDLKLPIQLPNTSTETVQLENNDPLNSIGLPYYKDELLSSWSKYLIFDVGKPILDSNLLIAKQISENSHPVPQEIKSFHRNQIIEVPWLNRKLISEGATPKFHSERQKDIMSGNDIEGSASYFEEIEDTISGPDSIPKFYQRPVIKYSKFGIEDFDFGFYNKTKYAGLETDITNSYCNSVLQLLSYVPSFSKAAISHSLGPCDLMECLLCELGFLFAMLKESTGRNCQATNFLRAFSNSSFAQSLGIVFDDYSDGTFPDSFVIQKFTKFMLTEISRIADYEDKKDGTSFPVSFLLKSFCIPEMQTYRCGICGITSQKIKSSLYIIDLHYPSQQLESILSFEWLFKMSLDRRVDLPPGWCEYCLAHQPFLLRSFIRSLPDCLFINTQVKHHEHWKLWARKNWLPKKLHLRRVNDTMQCVSQKISNLDKDQQSLSVYVLRGIIYEIRQNGEEPHFVSTIRVSDNTSSDNPDDNRWYIFNDFLVKEVTEEEALTVHGPWKIPIIVYYEKLDTKIPQWDEVSDYTLLYQPYSLNKNPPINKIQPLTTDEMLYPKMLVGIDSEFVALQQEETEVRSDGTKSTIKPSKLSLARVSVLRGEGPNKGLPFIDDYVATDDKVTDYLTEYSGIHPGDLDPDRSPYNVVPLKVAYKKLRLLVNAGCIFVGHGLQKDFRIINLLVPPEQVVDTVDLFFLSSRQRKLSLKFLAWYLLDEEIQLTEHDSIEDALTALKLYDCYDKLKSQGKLEETLDNIYEVGRRFKFRPPSVASMSLEDRNSYGDESVISNQTN.

WD repeat units lie at residues 16-56, 136-175, 178-224, and 270-309; these read VSTC…YTQF, HKDK…PVNK, AHTG…SLVP, and PLTS…SFSD. A linker region spans residues 309–443; sequence DLKLPIQLPN…EDTISGPDSI (135 aa). Residues 443–814 form the USP domain; it reads IPKFYQRPVI…IPIIVYYEKL (372 aa). The 174-residue stretch at 860–1033 folds into the Exonuclease domain; the sequence is VGIDSEFVAL…EDALTALKLY (174 aa). Residues aspartate 863, glutamate 865, aspartate 972, and aspartate 1025 each coordinate a divalent metal cation.

Belongs to the peptidase C19 family. PAN2 subfamily. As to quaternary structure, forms a heterotrimer with an asymmetric homodimer of the regulatory subunit ppk26/pan3 to form the poly(A)-nuclease (PAN) deadenylation complex. It depends on a divalent metal cation as a cofactor.

The protein resides in the cytoplasm. The enzyme catalyses Exonucleolytic cleavage of poly(A) to 5'-AMP.. Positively regulated by the regulatory subunit ppk26/pan3. Functionally, catalytic subunit of the poly(A)-nuclease (PAN) deadenylation complex, one of two cytoplasmic mRNA deadenylases involved in mRNA turnover. PAN specifically shortens poly(A) tails of RNA and the activity is stimulated by poly(A)-binding protein pab1. PAN deadenylation is followed by rapid degradation of the shortened mRNA tails by the CCR4-NOT complex. Deadenylated mRNAs are then degraded by two alternative mechanisms, namely exosome-mediated 3'-5' exonucleolytic degradation, or deadenylation-dependent mRNA decaping and subsequent 5'-3' exonucleolytic degradation by xrn1. May also be involved in post-transcriptional maturation of mRNA poly(A) tails. In Schizosaccharomyces pombe (strain 972 / ATCC 24843) (Fission yeast), this protein is PAN2-PAN3 deadenylation complex catalytic subunit pan2.